The chain runs to 392 residues: Cytochrome b (392 aa).

4 helical membrane-spanning segments follow: residues 38–58 (FGSL…FLAM), 82–104 (WLLR…LHIF), 119–139 (VRCL…TGYV), and 185–205 (FFSL…LHLA). Positions 88 and 102 each coordinate heme b. Heme b-binding residues include His-189 and His-203. His-208 contributes to the a ubiquinone binding site. 4 consecutive transmembrane segments (helical) span residues 231–251 (FYVK…IWIF), 295–315 (SGGV…PFFK), 327–347 (IHQG…WIGC), and 354–373 (FVTI…AITP).

This sequence belongs to the cytochrome b family. As to quaternary structure, the main subunits of complex b-c1 are: cytochrome b, cytochrome c1 and the Rieske protein. The cofactor is heme b.

Its subcellular location is the mitochondrion inner membrane. Functionally, component of the ubiquinol-cytochrome c reductase complex (complex III or cytochrome b-c1 complex) that is part of the mitochondrial respiratory chain. The b-c1 complex mediates electron transfer from ubiquinol to cytochrome c. Contributes to the generation of a proton gradient across the mitochondrial membrane that is then used for ATP synthesis. The sequence is that of Cytochrome b (MT-CYB) from Vicia faba (Broad bean).